The primary structure comprises 434 residues: Serine--tRNA ligase (434 aa).

239-241 (TAE) is an L-serine binding site. An ATP-binding site is contributed by 270–272 (RSE). E293 is a binding site for L-serine. 357 to 360 (EISS) serves as a coordination point for ATP. Residue S393 coordinates L-serine.

This sequence belongs to the class-II aminoacyl-tRNA synthetase family. Type-1 seryl-tRNA synthetase subfamily. Homodimer. The tRNA molecule binds across the dimer.

The protein resides in the cytoplasm. The catalysed reaction is tRNA(Ser) + L-serine + ATP = L-seryl-tRNA(Ser) + AMP + diphosphate + H(+). It catalyses the reaction tRNA(Sec) + L-serine + ATP = L-seryl-tRNA(Sec) + AMP + diphosphate + H(+). It functions in the pathway aminoacyl-tRNA biosynthesis; selenocysteinyl-tRNA(Sec) biosynthesis; L-seryl-tRNA(Sec) from L-serine and tRNA(Sec): step 1/1. In terms of biological role, catalyzes the attachment of serine to tRNA(Ser). Is also able to aminoacylate tRNA(Sec) with serine, to form the misacylated tRNA L-seryl-tRNA(Sec), which will be further converted into selenocysteinyl-tRNA(Sec). This chain is Serine--tRNA ligase, found in Mesorhizobium japonicum (strain LMG 29417 / CECT 9101 / MAFF 303099) (Mesorhizobium loti (strain MAFF 303099)).